Reading from the N-terminus, the 200-residue chain is Gene 55 protein (200 aa).

Cys-8 carries the S-palmitoyl cysteine; by host lipid modification.

The protein belongs to the herpesviridae UL51 family. As to quaternary structure, oligomerizes. Interacts with ORF42; this interaction mediates ORF42 incorporation to virions. In terms of processing, phosphorylated. Post-translationally, palmitoylation is necessary for Golgi localization.

It is found in the virion tegument. The protein localises to the host cytoplasm. It localises to the host Golgi apparatus. In terms of biological role, plays several roles during the time course of infection, including egress of virus particles from the perinuclear space and secondary envelopment of cytoplasmic capsids that bud into specific trans-Golgi network (TGN)-derived membranes. The protein is Gene 55 protein (55) of Saimiriine herpesvirus 2 (strain 11) (SaHV-2).